The primary structure comprises 388 residues: Processive diacylglycerol beta-glucosyltransferase (388 aa).

Belongs to the glycosyltransferase 28 family. UgtP subfamily.

It is found in the cell membrane. The enzyme catalyses a 1,2-diacyl-3-O-(beta-D-glucopyranosyl)-sn-glycerol + UDP-alpha-D-glucose = a 1,2-diacyl-3-O-(beta-D-Glc-(1-&gt;6)-beta-D-Glc)-sn-glycerol + UDP + H(+). It catalyses the reaction a 1,2-diacyl-3-O-(beta-D-Glc-(1-&gt;6)-beta-D-Glc)-sn-glycerol + UDP-alpha-D-glucose = a 1,2-diacyl-3-O-(beta-D-Glc-(1-&gt;6)-beta-D-Glc-(1-&gt;6)-beta-D-Glc)-sn-glycerol + UDP + H(+). It carries out the reaction a 1,2-diacyl-sn-glycerol + UDP-alpha-D-glucose = a 1,2-diacyl-3-O-(beta-D-glucopyranosyl)-sn-glycerol + UDP + H(+). It functions in the pathway glycolipid metabolism; diglucosyl-diacylglycerol biosynthesis. Its function is as follows. Processive glucosyltransferase involved in the biosynthesis of both the bilayer- and non-bilayer-forming membrane glucolipids. Is able to successively transfer up to three glucosyl residues to diacylglycerol (DAG), thereby catalyzing the formation of beta-monoglucosyl-DAG (3-O-(beta-D-glucopyranosyl)-1,2-diacyl-sn-glycerol), beta-diglucosyl-DAG (3-O-(beta-D-glucopyranosyl-beta-(1-&gt;6)-D-glucopyranosyl)-1,2-diacyl-sn-glycerol) and beta-triglucosyl-DAG (3-O-(beta-D-glucopyranosyl-beta-(1-&gt;6)-D-glucopyranosyl-beta-(1-&gt;6)-D-glucopyranosyl)-1,2-diacyl-sn-glycerol). Beta-diglucosyl-DAG is the predominant glycolipid found in Bacillales and is also used as a membrane anchor for lipoteichoic acid (LTA). The chain is Processive diacylglycerol beta-glucosyltransferase from Bacillus cereus (strain G9842).